The sequence spans 497 residues: Histidine--tRNA ligase (497 aa).

It belongs to the class-II aminoacyl-tRNA synthetase family. In terms of assembly, homodimer.

The protein localises to the cytoplasm. The catalysed reaction is tRNA(His) + L-histidine + ATP = L-histidyl-tRNA(His) + AMP + diphosphate + H(+). The protein is Histidine--tRNA ligase of Dinoroseobacter shibae (strain DSM 16493 / NCIMB 14021 / DFL 12).